Reading from the N-terminus, the 841-residue chain is Taste receptor type 1 member 1 (841 aa).

The N-terminal stretch at 1–20 (MLLCTARLVGLQLLISCCWA) is a signal peptide. The Extracellular segment spans residues 21 to 567 (FACHSTESSP…VFLALREHTS (547 aa)). N87, N88, N95, N291, N479, and N529 each carry an N-linked (GlcNAc...) asparagine glycan. The chain crosses the membrane as a helical span at residues 568–588 (WVLLAANTLLLLLLLGTAGLF). Over 589 to 603 (AWHLDTPVVRSAGGR) the chain is Cytoplasmic. The helical transmembrane segment at 604–624 (LCFLMLGSLAAGSGSLYGFFG) threads the bilayer. Over 625–639 (EPTRPACLLRQALFA) the chain is Extracellular. A helical transmembrane segment spans residues 640–660 (LGFTIFLSCLTVRSFQLIIIF). Over 661–680 (KFSTKVPTFYHAWVQNHGAG) the chain is Cytoplasmic. Residues 681 to 701 (LFVMISSAAQLLICLTWLVVW) traverse the membrane as a helical segment. The Extracellular portion of the chain corresponds to 702–725 (TPLPAREYQRFPHLVMLECTETNS). Residues 726-746 (LGFILAFLYNGLLSISAFACS) traverse the membrane as a helical segment. At 747 to 761 (YLGKDLPENYNEAKC) the chain is on the cytoplasmic side. Residues 762 to 782 (VTFSLLFNFVSWIAFFTTASV) traverse the membrane as a helical segment. The Extracellular segment spans residues 783–795 (YDGKYLPAANMMA). The chain crosses the membrane as a helical span at residues 796-816 (GLSSLSSGFGGYFLPKCYVIL). Residues 817–841 (CRPDLNSTEHFQASIQDYTRRCGST) are Cytoplasmic-facing.

Belongs to the G-protein coupled receptor 3 family. TAS1R subfamily. Forms heterodimers with TAS1R3.

Its subcellular location is the cell membrane. Its function is as follows. Putative taste receptor. TAS1R1/TAS1R3 responds to the umami taste stimulus (the taste of monosodium glutamate). Sequence differences within and between species can significantly influence the selectivity and specificity of taste responses. This Homo sapiens (Human) protein is Taste receptor type 1 member 1 (TAS1R1).